The sequence spans 261 residues: Putative hydro-lyase SAR11_0660 (261 aa).

It belongs to the D-glutamate cyclase family.

In Pelagibacter ubique (strain HTCC1062), this protein is Putative hydro-lyase SAR11_0660.